Consider the following 611-residue polypeptide: Guanylate-binding protein 6 (611 aa).

The tract at residues 1–308 (MTQPQMAPIC…NAINSGAVPC (308 aa)) is GTPase domain (Globular). Residues 33-275 (SQPVVVVAIV…FVSYIFTYAK (243 aa)) enclose the GB1/RHD3-type G domain. GTP-binding positions include 43–50 (GLYRTGKS), 65–67 (LGS), and 95–99 (DTEGL).

It belongs to the TRAFAC class dynamin-like GTPase superfamily. GB1/RHD3 GTPase family. GB1 subfamily.

The protein localises to the cytoplasmic vesicle. It carries out the reaction GTP + H2O = GDP + phosphate + H(+). Interferon (IFN)-inducible GTPase that plays important roles in innate immunity against a diverse range of bacterial, viral and protozoan pathogens, such as bacterial pathogens Listeria monocytogenes and Mycobacterium bovis BCG as well as the protozoan pathogen Toxoplasma gondii. Confers protection to several pathogens, including the bacterial pathogens Listeria monocytogenes and Mycobacterium bovis BCG as well as the protozoan pathogen Toxoplasma gondii. The chain is Guanylate-binding protein 6 (Gbp6) from Mus musculus (Mouse).